The chain runs to 698 residues: Polyribonucleotide nucleotidyltransferase (698 aa).

Aspartate 486 and aspartate 492 together coordinate Mg(2+). One can recognise a KH domain in the interval 553–612; that stretch reads PRIIVRNIPKDRIGELIGPGGKNVRGISELTGAELYIEDDGKVTISGSNQESAEKAAKMV. The S1 motif domain maps to 622–690; it reads GKIYEGKVKR…KTGKIDLSRK (69 aa).

It belongs to the polyribonucleotide nucleotidyltransferase family. The cofactor is Mg(2+).

Its subcellular location is the cytoplasm. It carries out the reaction RNA(n+1) + phosphate = RNA(n) + a ribonucleoside 5'-diphosphate. In terms of biological role, involved in mRNA degradation. Catalyzes the phosphorolysis of single-stranded polyribonucleotides processively in the 3'- to 5'-direction. This Leptospira interrogans serogroup Icterohaemorrhagiae serovar copenhageni (strain Fiocruz L1-130) protein is Polyribonucleotide nucleotidyltransferase.